Reading from the N-terminus, the 257-residue chain is UPF0758 protein Bcenmc03_2526 (257 aa).

The segment at 1–53 is disordered; the sequence is MLSPCPILPSAECRDTADTPADPPGRVIPINRRRRRPGDWRPERPRERLLERG. The segment covering 37–51 has biased composition (basic and acidic residues); sequence PGDWRPERPRERLLE. One can recognise an MPN domain in the interval 135–257; the sequence is QIDSPGAVED…TFSFARAGWL (123 aa). 3 residues coordinate Zn(2+): His-206, His-208, and Asp-219. The short motif at 206-219 is the JAMM motif element; sequence HNHPSGAVQPSAED.

This sequence belongs to the UPF0758 family.

This chain is UPF0758 protein Bcenmc03_2526, found in Burkholderia orbicola (strain MC0-3).